The chain runs to 202 residues: Securin (202 aa).

A disordered region spans residues 36–55 (DGRSQVSTPHVGKMFDAPPA). The D-box motif lies at 61–64 (RKAL). 2 short sequence motifs (TEK-box) span residues 71 to 73 (TEK) and 94 to 96 (TEK). The short motif at 163–173 (PPSPLKMPPLL) is the SH3-binding element. A Phosphoserine; by CDK1 modification is found at Ser165.

Belongs to the securin family. As to quaternary structure, interacts with RPS10 and DNAJA1. Interacts with the caspase-like ESPL1, and prevents its protease activity probably by covering its active site. Interacts with TP53 and blocks its activity probably by blocking its binding to DNA. Interacts with the Ku 70 kDa subunit of ds-DNA kinase. Interacts with PTTG1IP. Post-translationally, phosphorylated at Ser-165 by CDK1 during mitosis. Phosphorylated in vitro by ds-DNA kinase. In terms of processing, ubiquitinated through 'Lys-11' linkage of ubiquitin moieties by the anaphase promoting complex (APC) at the onset of anaphase, conducting to its degradation. 'Lys-11'-linked ubiquitination is mediated by the E2 ligase UBE2C/UBCH10.

The protein resides in the cytoplasm. It localises to the nucleus. Regulatory protein, which plays a central role in chromosome stability, in the p53/TP53 pathway, and DNA repair. Probably acts by blocking the action of key proteins. During the mitosis, it blocks Separase/ESPL1 function, preventing the proteolysis of the cohesin complex and the subsequent segregation of the chromosomes. At the onset of anaphase, it is ubiquitinated, conducting to its destruction and to the liberation of ESPL1. Its function is however not limited to a blocking activity, since it is required to activate ESPL1. Negatively regulates the transcriptional activity and related apoptosis activity of TP53. The negative regulation of TP53 may explain the strong transforming capability of the protein when it is overexpressed. May also play a role in DNA repair via its interaction with Ku, possibly by connecting DNA damage-response pathways with sister chromatid separation. The chain is Securin (PTTG1) from Bos taurus (Bovine).